The following is a 1441-amino-acid chain: Remodeling and spacing factor 1 (1441 aa).

The DDT domain maps to 17-84 (PGSCPNFAVV…MRKIGKSVTA (68 aa)). Residues lysine 136 and lysine 215 each participate in a glycyl lysine isopeptide (Lys-Gly) (interchain with G-Cter in SUMO2) cross-link. Polar residues predominate over residues 215 to 227 (KNSSQQDNSSRES). The tract at residues 215–283 (KNSSQQDNSS…TTVKKEKEDE (69 aa)) is disordered. Serine 227 is subject to Phosphoserine. Basic and acidic residues-rich tracts occupy residues 234–257 (ETKKEEETPKQEEQKESEKMKSEE) and 274–283 (TTVKKEKEDE). Glycyl lysine isopeptide (Lys-Gly) (interchain with G-Cter in SUMO2) cross-links involve residues lysine 236, lysine 243, lysine 248, lysine 252, and lysine 254. Residue lysine 277 forms a Glycyl lysine isopeptide (Lys-Gly) (interchain with G-Cter in SUMO1); alternate linkage. Residue lysine 277 forms a Glycyl lysine isopeptide (Lys-Gly) (interchain with G-Cter in SUMO2); alternate linkage. Residues lysine 284, lysine 288, lysine 294, lysine 305, lysine 306, lysine 309, lysine 323, lysine 327, lysine 337, lysine 342, lysine 358, lysine 373, lysine 381, and lysine 390 each participate in a glycyl lysine isopeptide (Lys-Gly) (interchain with G-Cter in SUMO2) cross-link. Basic and acidic residues predominate over residues 330–340 (RADPKDTKSSM). The interval 330–385 (RADPKDTKSSMEKPVAQEPERIEFGGNIKSSHEITEKSTEETEKLKNDQQAKIPLK) is disordered. Over residues 359–378 (SSHEITEKSTEETEKLKNDQ) the composition is skewed to basic and acidic residues. Phosphoserine is present on residues serine 392 and serine 397. Residues lysine 400, lysine 405, lysine 415, and lysine 419 each participate in a glycyl lysine isopeptide (Lys-Gly) (interchain with G-Cter in SUMO2) cross-link. Position 429 is a phosphoserine (serine 429). A Glycyl lysine isopeptide (Lys-Gly) (interchain with G-Cter in SUMO2) cross-link involves residue lysine 439. Lysine 456 is covalently cross-linked (Glycyl lysine isopeptide (Lys-Gly) (interchain with G-Cter in SUMO1); alternate). Residue lysine 456 forms a Glycyl lysine isopeptide (Lys-Gly) (interchain with G-Cter in SUMO2); alternate linkage. Residues lysine 463 and lysine 468 each participate in a glycyl lysine isopeptide (Lys-Gly) (interchain with G-Cter in SUMO2) cross-link. A compositionally biased stretch (basic and acidic residues) spans 467-480 (TKEESYSPSKDRNI). The disordered stretch occupies residues 467 to 634 (TKEESYSPSK…AAETSPPSNI (168 aa)). The residue at position 473 (serine 473) is a Phosphoserine. The segment covering 482–498 (TEGNGTESLNSVITSMK) has biased composition (polar residues). A Glycyl lysine isopeptide (Lys-Gly) (interchain with G-Cter in SUMO2) cross-link involves residue lysine 498. The segment covering 500–514 (GELEKETAPLRKDAD) has biased composition (basic and acidic residues). Phosphoserine is present on serine 524. The segment covering 552–562 (SKTALSSTESC) has biased composition (polar residues). Residue lysine 565 forms a Glycyl lysine isopeptide (Lys-Gly) (interchain with G-Cter in SUMO2) linkage. Residues 565–601 (KGEEKSPKTKKDKRPPILECLEKLEKSKKTFLDKDAQ) show a composition bias toward basic and acidic residues. Serine 570 and serine 604 each carry phosphoserine. A compositionally biased stretch (basic and acidic residues) spans 609–621 (EVPKSTLESEKPG). Residue serine 622 is modified to Phosphoserine. A Phosphothreonine modification is found at threonine 628. Serine 629 carries the post-translational modification Phosphoserine. Residues lysine 662, lysine 663, lysine 670, lysine 677, lysine 698, and lysine 709 each participate in a glycyl lysine isopeptide (Lys-Gly) (interchain with G-Cter in SUMO2) cross-link. Positions 675 to 887 (FTKVEMDNLD…EEKESEEAIL (213 aa)) are disordered. At serine 748 the chain carries Phosphoserine. Basic and acidic residues-rich tracts occupy residues 753–770 (LEPENKQEKTEKEEEKTN), 789–802 (AEIRDQKADKKRGE), and 816–831 (KTDKKEILKKSEKDTN). Glycyl lysine isopeptide (Lys-Gly) (interchain with G-Cter in SUMO2) cross-links involve residues lysine 758, lysine 768, lysine 795, and lysine 799. A compositionally biased stretch (low complexity) spans 864-873 (GSGSEKSSAA). Acidic residues predominate over residues 874-887 (SEEEEEKESEEAIL). At serine 882 the chain carries Phosphoserine. The segment at 891-941 (DEPCKKCGLPNHPELILLCDSCDSGYHTACLRPPLMIIPDGEWFCPPCQHK) adopts a PHD-type zinc-finger fold. Residues 942-1012 (LLCEKLEEQL…SKANLLERRS (71 aa)) are a coiled coil. The segment at 983-1007 (PPQEPDFSEDQEEKKKDSKKSKANL) is disordered. Lysine 1039 is covalently cross-linked (Glycyl lysine isopeptide (Lys-Gly) (interchain with G-Cter in SUMO2)). Lysine 1050 is subject to N6-acetyllysine. A disordered region spans residues 1063–1428 (ISTILDEERK…EEEEDELLRV (366 aa)). Acidic residues-rich tracts occupy residues 1094–1107 (LDSDSNLDEEESED) and 1120–1141 (VVSDENPDESEEDPPSNDDSDT). A phosphoserine mark is found at serine 1096, serine 1098, and serine 1105. Residues 1146–1169 (RRLRRHPSRPMRQSRRLRRKTPKK) are compositionally biased toward basic residues. The span at 1189–1199 (SDFSDDFSDDF) shows a compositional bias: acidic residues. Basic residues predominate over residues 1203 to 1212 (RRRRSRRNQK). A phosphoserine mark is found at serine 1221, serine 1223, and serine 1226. Residues 1229–1244 (SLRRGKEIRRVHKRRL) show a composition bias toward basic residues. Serine 1258 and serine 1277 each carry phosphoserine. Residue threonine 1278 is modified to Phosphothreonine. Acidic residues predominate over residues 1280–1292 (EYSEADEEEEEEE). Position 1305 is a phosphothreonine (threonine 1305). Phosphoserine occurs at positions 1325 and 1336. Over residues 1335–1344 (ESTKKPYRIE) the composition is skewed to basic and acidic residues. Residue lysine 1339 is modified to N6-acetyllysine. Phosphoserine occurs at positions 1345, 1359, and 1375. Polar residues predominate over residues 1394–1408 (PKDNSTASASLASNG).

As to quaternary structure, component of the RSF-1 ISWI chromatin-remodeling complex at least composed of SMARCA1 and RSF1. Within the RSF-1 ISWI chromatin-remodeling complex interacts with SMARCA1. Component of the RSF-5 ISWI chromatin-remodeling complex (also called the RSF complex) at least composed of SMARCA5/SNF2H and RSF1. Within the RSF-5 ISWI chromatin-remodeling complex interacts with SMARCA5/SNF2H; the interaction is direct. Identified in a centromere complex containing histones H2A, H2B and H4, and at least CENPA, CENPB, CENPC, CENPT, CENPN, HJURP, SUPT16H, SSRP1 and RSF1. Also binds the HBV pX/HBx protein, which is required to activate transcription of the viral genome. Post-translationally, phosphorylated. Ubiquitously expressed. Highly expressed in the heart, skeletal muscle, kidney and placenta. Expressed at low levels in the brain and colon.

It is found in the nucleus. Functionally, regulatory subunit of the ATP-dependent RSF-1 and RSF-5 ISWI chromatin-remodeling complexes, which form ordered nucleosome arrays on chromatin and facilitate access to DNA during DNA-templated processes such as DNA replication, transcription, and repair. Binds to core histones together with SMARCA5, and is required for the assembly of regular nucleosome arrays by the RSF-5 ISWI chromatin-remodeling complex. Directly stimulates the ATPase activity of SMARCA1 and SMARCA5 in the RSF-1 and RSF-5 ISWI chromatin-remodeling complexes, respectively. The RSF-1 ISWI chromatin remodeling complex has a lower ATP hydrolysis rate than the RSF-5 ISWI chromatin-remodeling complex. The complexes do not have the ability to slide mononucleosomes to the center of a DNA template. Facilitates transcription of hepatitis B virus (HBV) genes by the pX transcription activator. In case of infection by HBV, together with pX, it represses TNF-alpha induced NF-kappa-B transcription activation. Represses transcription when artificially recruited to chromatin by fusion to a heterogeneous DNA binding domain. The polypeptide is Remodeling and spacing factor 1 (RSF1) (Homo sapiens (Human)).